A 397-amino-acid polypeptide reads, in one-letter code: Riboflavin biosynthesis protein RibBA (397 aa).

The segment at 1-199 is DHBP synthase; sequence MFHRIEEALE…IEDLIAYRRH (199 aa). Residues 26-27, Asp-31, 138-142, and Glu-162 each bind D-ribulose 5-phosphate; these read RE and RAGHT. Glu-27 is a binding site for Mg(2+). Residue His-141 participates in Mg(2+) binding. The tract at residues 200–397 is GTP cyclohydrolase II; that stretch reads HETLVTREAE…VNKLGHLLNL (198 aa). 250–254 lines the GTP pocket; sequence RVHSE. Residues Cys-255, Cys-266, and Cys-268 each coordinate Zn(2+). Residues Gln-271, 293 to 295, and Thr-315 contribute to the GTP site; that span reads EGR. Asp-327 (proton acceptor; for GTP cyclohydrolase activity) is an active-site residue. Residue Arg-329 is the Nucleophile; for GTP cyclohydrolase activity of the active site. GTP contacts are provided by Thr-350 and Lys-355.

It in the N-terminal section; belongs to the DHBP synthase family. In the C-terminal section; belongs to the GTP cyclohydrolase II family. Mg(2+) is required as a cofactor. The cofactor is Mn(2+). Zn(2+) serves as cofactor.

The catalysed reaction is D-ribulose 5-phosphate = (2S)-2-hydroxy-3-oxobutyl phosphate + formate + H(+). It carries out the reaction GTP + 4 H2O = 2,5-diamino-6-hydroxy-4-(5-phosphoribosylamino)-pyrimidine + formate + 2 phosphate + 3 H(+). The protein operates within cofactor biosynthesis; riboflavin biosynthesis; 2-hydroxy-3-oxobutyl phosphate from D-ribulose 5-phosphate: step 1/1. Its pathway is cofactor biosynthesis; riboflavin biosynthesis; 5-amino-6-(D-ribitylamino)uracil from GTP: step 1/4. Catalyzes the conversion of D-ribulose 5-phosphate to formate and 3,4-dihydroxy-2-butanone 4-phosphate. Functionally, catalyzes the conversion of GTP to 2,5-diamino-6-ribosylamino-4(3H)-pyrimidinone 5'-phosphate (DARP), formate and pyrophosphate. This is Riboflavin biosynthesis protein RibBA from Bacillus cereus (strain ATCC 14579 / DSM 31 / CCUG 7414 / JCM 2152 / NBRC 15305 / NCIMB 9373 / NCTC 2599 / NRRL B-3711).